Reading from the N-terminus, the 296-residue chain is Magnetosome protein MamB (296 aa).

Residues 1-12 (MKFENCRDCREE) lie on the Cytoplasmic side of the membrane. A transmembrane domain (TMD) region spans residues 1-214 (MKFENCRDCR…GLMDSSVDTE (214 aa)). A helical membrane pass occupies residues 13–33 (VVWWAFTADICMTLFKGVLGL). The Lumenal portion of the chain corresponds to 34-83 (MSGSVALVADSLHSGADVVASGVTQLSLKISNKPADERYPFGYGNIQYIS). The helical transmembrane segment at 84 to 104 (SSIVGSLLLIGASFLMYGSVM) threads the bilayer. At 105-112 (KLISGTYE) the chain is on the cytoplasmic side. A helical membrane pass occupies residues 113–133 (APSIFAAVGASVTVIVNELMY). The Lumenal portion of the chain corresponds to 134–164 (RYQICVGNENNSPAIIANAWDNRSDAISSAA). The chain crosses the membrane as a helical span at residues 165–185 (VMVGVIASVIGFPIADTIAAI). Residues 186-296 (GVSALVGRIG…SPAPAAAARA (111 aa)) are Cytoplasmic-facing. A C-terminal domain (CTD) region spans residues 215–296 (LLQTAWQVAM…SPAPAAAARA (82 aa)).

It belongs to the cation diffusion facilitator (CDF) transporter (TC 2.A.4) family. As to quaternary structure, forms heterodimers with MamM. Probably interacts with MamE.

It localises to the magnetosome membrane. Its function is as follows. Plays a dual, essential role in magnetosome formation; required for magnetosome vesicle formation as well as biomineralization. Probably binds and transports iron. Requires heterodimerization with MamM for stability. In Paramagnetospirillum magneticum (strain ATCC 700264 / AMB-1) (Magnetospirillum magneticum), this protein is Magnetosome protein MamB (mamB).